Consider the following 758-residue polypeptide: 5-methyltetrahydropteroyltriglutamate--homocysteine methyltransferase (758 aa).

Residues 16-19 (RELK) and Lys112 each bind 5-methyltetrahydropteroyltri-L-glutamate. Residues 433–435 (IGS) and Glu486 each bind L-homocysteine. L-methionine is bound by residues 433–435 (IGS) and Glu486. 5-methyltetrahydropteroyltri-L-glutamate contacts are provided by residues 517-518 (RC) and Trp563. Asp601 serves as a coordination point for L-homocysteine. Position 601 (Asp601) interacts with L-methionine. Glu607 provides a ligand contact to 5-methyltetrahydropteroyltri-L-glutamate. Residues His643, Cys645, and Glu667 each coordinate Zn(2+). His696 acts as the Proton donor in catalysis. Cys728 contributes to the Zn(2+) binding site.

It belongs to the vitamin-B12 independent methionine synthase family. Zn(2+) serves as cofactor.

The enzyme catalyses 5-methyltetrahydropteroyltri-L-glutamate + L-homocysteine = tetrahydropteroyltri-L-glutamate + L-methionine. It participates in amino-acid biosynthesis; L-methionine biosynthesis via de novo pathway; L-methionine from L-homocysteine (MetE route): step 1/1. In terms of biological role, catalyzes the transfer of a methyl group from 5-methyltetrahydrofolate to homocysteine resulting in methionine formation. The chain is 5-methyltetrahydropteroyltriglutamate--homocysteine methyltransferase from Neisseria meningitidis serogroup C (strain 053442).